Here is a 370-residue protein sequence, read N- to C-terminus: Aspartate beta-hydroxylase domain-containing protein 2 (370 aa).

Residues 1-57 are Cytoplasmic-facing; that stretch reads MVWALPRTSSPSCIAPSYKPDSGWIKMSAEWLIDWSCLLNGLRDLIAGCIQAVRDCN. Residues 58–78 form a helical membrane-spanning segment; it reads SFALTTVICLLMLFAWYCYRV. Over 79 to 370 the chain is Lumenal; that stretch reads GKDQPRSPFA…ALDSIFAPGR (292 aa). Asparagine 212 is a glycosylation site (N-linked (GlcNAc...) asparagine). Positions 229 and 273 each coordinate 2-oxoglutarate. Residue histidine 284 coordinates Fe cation. 293-295 provides a ligand contact to 2-oxoglutarate; it reads RCH. Histidine 329 is a binding site for Fe cation. Position 342 (arginine 342) interacts with 2-oxoglutarate.

Belongs to the aspartyl/asparaginyl beta-hydroxylase family. Requires Fe cation as cofactor.

It localises to the membrane. Its function is as follows. May function as 2-oxoglutarate-dependent dioxygenase. This Xenopus tropicalis (Western clawed frog) protein is Aspartate beta-hydroxylase domain-containing protein 2 (asphd2).